The primary structure comprises 353 residues: Ferredoxin--NADP reductase (353 aa).

FAD is bound by residues Thr-25, Glu-44, Gln-52, Tyr-57, Val-97, Phe-132, Asp-298, and Ser-339.

The protein belongs to the ferredoxin--NADP reductase type 2 family. Homodimer. The cofactor is FAD.

It catalyses the reaction 2 reduced [2Fe-2S]-[ferredoxin] + NADP(+) + H(+) = 2 oxidized [2Fe-2S]-[ferredoxin] + NADPH. In Chlorobium phaeovibrioides (strain DSM 265 / 1930) (Prosthecochloris vibrioformis (strain DSM 265)), this protein is Ferredoxin--NADP reductase.